We begin with the raw amino-acid sequence, 178 residues long: Translation initiation factor IF-3 (178 aa).

The protein belongs to the IF-3 family. Monomer.

It localises to the cytoplasm. Functionally, IF-3 binds to the 30S ribosomal subunit and shifts the equilibrium between 70S ribosomes and their 50S and 30S subunits in favor of the free subunits, thus enhancing the availability of 30S subunits on which protein synthesis initiation begins. In Ureaplasma parvum serovar 3 (strain ATCC 700970), this protein is Translation initiation factor IF-3.